A 369-amino-acid chain; its full sequence is Chaperone protein DnaJ (369 aa).

The region spanning 4-69 (SYYEILEVEK…KKRALYDRYG (66 aa)) is the J domain. A CR-type zinc finger spans residues 130–207 (GCKKTIKVQY…CKGKTYILKD (78 aa)). Positions 143, 146, 159, 162, 181, 184, 195, and 198 each coordinate Zn(2+). CXXCXGXG motif repeat units follow at residues 143–150 (CESCDGTG), 159–166 (CKQCNGQG), 181–188 (CGACQGKG), and 195–202 (CQACKGKT).

This sequence belongs to the DnaJ family. In terms of assembly, homodimer. Requires Zn(2+) as cofactor.

The protein localises to the cytoplasm. Participates actively in the response to hyperosmotic and heat shock by preventing the aggregation of stress-denatured proteins and by disaggregating proteins, also in an autonomous, DnaK-independent fashion. Unfolded proteins bind initially to DnaJ; upon interaction with the DnaJ-bound protein, DnaK hydrolyzes its bound ATP, resulting in the formation of a stable complex. GrpE releases ADP from DnaK; ATP binding to DnaK triggers the release of the substrate protein, thus completing the reaction cycle. Several rounds of ATP-dependent interactions between DnaJ, DnaK and GrpE are required for fully efficient folding. Also involved, together with DnaK and GrpE, in the DNA replication of plasmids through activation of initiation proteins. This Helicobacter pylori (strain ATCC 700392 / 26695) (Campylobacter pylori) protein is Chaperone protein DnaJ.